The chain runs to 599 residues: MLCLGWIFLWLVAGERIKGFNISGCSTKKLLWTYSTRSEEEFVLFCDLPEPQKSHFCHRNRLSPKQVPEHLPFMGSNDLSDVQWYQQPSNGDPLEDIRKSYPHIIQDKCTLHFLTPGVNNSGSYICRPKMIKSPYDVACCVKMILEVKPQTNASCEYSASHKQDLLLGSTGSISCPSLSCQSDAQSPAVTWYKNGKLLSVERSNRIVVDEVYDYHQGTYVCDYTQSDTVSSWTVRAVVQVRTIVGDTKLKPDILDPVEDTLEVELGKPLTISCKARFGFERVFNPVIKWYIKDSDLEWEVSVPEAKSIKSTLKDEIIERNIILEKVTQRDLRRKFVCFVQNSIGNTTQSVQLKEKRGVVLLYILLGTIGTLVAVLAASALLYRHWIEIVLLYRTYQSKDQTLGDKKDFDAFVSYAKWSSFPSEATSSLSEEHLALSLFPDVLENKYGYSLCLLERDVAPGGVYAEDIVSIIKRSRRGIFILSPNYVNGPSIFELQAAVNLALDDQTLKLILIKFCYFQEPESLPHLVKKALRVLPTVTWRGLKSVPPNSRFWAKMRYHMPVKNSQGFTWNQLRITSRIFQWKGLSRTETTGRSSQPKEW.

An N-terminal signal peptide occupies residues 1–19 (MLCLGWIFLWLVAGERIKG). The Extracellular segment spans residues 20-356 (FNISGCSTKK…TQSVQLKEKR (337 aa)). Residues Asn-21, Asn-119, and Asn-152 are each glycosylated (N-linked (GlcNAc...) asparagine). Residues Cys-46 and Cys-126 are joined by a disulfide bond. Ig-like C2-type domains are found at residues 149–235 (PQTN…WTVR) and 251–353 (PDIL…VQLK). Disulfide bonds link Cys-155/Cys-180, Cys-175/Cys-221, Cys-180/Cys-221, and Cys-273/Cys-337. An N-linked (GlcNAc...) asparagine glycan is attached at Asn-345. Residues 357-377 (GVVLLYILLGTIGTLVAVLAA) traverse the membrane as a helical segment. At 378 to 599 (SALLYRHWIE…TGRSSQPKEW (222 aa)) the chain is on the cytoplasmic side. Residues 406 to 559 (KDFDAFVSYA…RFWAKMRYHM (154 aa)) form the TIR domain. Glu-493 is an active-site residue.

The protein belongs to the interleukin-1 receptor family. In terms of assembly, forms a ternary complex with IL18 and IL18R1. Within this complex, IL18R1 is involved in ligand-binding and IL18RAP in signaling leading to NF-kappa-B and JNK activation. In terms of processing, N-glycosylated. Detected in adrenal gland, bone marrow, brain, fetal brain, fetal liver, heart, kidney, lung, liver, peripheral blood leukocytes, placenta, prostate, salivary gland, skeletal muscle, spinal cord, testis, thymus, thyroid, trachea and uterus. Strongly expressed in peripheral blood leukocytes and spleen and, to a lesser extent, in colon. Specifically coexpressed with IL18R1 in T-helper 1 (Th1)cells.

It is found in the cell membrane. The catalysed reaction is NAD(+) + H2O = ADP-D-ribose + nicotinamide + H(+). Functionally, within the IL18 receptor complex, does not mediate IL18-binding, but involved in IL18-dependent signal transduction, leading to NF-kappa-B and JNK activation. May play a role in IL18-mediated IFNG synthesis from T-helper 1 (Th1) cells. The sequence is that of Interleukin-18 receptor accessory protein from Homo sapiens (Human).